The chain runs to 235 residues: Pyridoxine 5'-phosphate synthase (235 aa).

Residue N6 participates in 3-amino-2-oxopropyl phosphate binding. A 1-deoxy-D-xylulose 5-phosphate-binding site is contributed by D8 to H9. A 3-amino-2-oxopropyl phosphate-binding site is contributed by R17. H42 acts as the Proton acceptor in catalysis. 2 residues coordinate 1-deoxy-D-xylulose 5-phosphate: R44 and H49. E69 (proton acceptor) is an active-site residue. 1-deoxy-D-xylulose 5-phosphate is bound at residue T99. H189 functions as the Proton donor in the catalytic mechanism. 3-amino-2-oxopropyl phosphate-binding positions include G190 and G211–H212.

Belongs to the PNP synthase family. Homooctamer; tetramer of dimers.

It localises to the cytoplasm. The catalysed reaction is 3-amino-2-oxopropyl phosphate + 1-deoxy-D-xylulose 5-phosphate = pyridoxine 5'-phosphate + phosphate + 2 H2O + H(+). The protein operates within cofactor biosynthesis; pyridoxine 5'-phosphate biosynthesis; pyridoxine 5'-phosphate from D-erythrose 4-phosphate: step 5/5. Functionally, catalyzes the complicated ring closure reaction between the two acyclic compounds 1-deoxy-D-xylulose-5-phosphate (DXP) and 3-amino-2-oxopropyl phosphate (1-amino-acetone-3-phosphate or AAP) to form pyridoxine 5'-phosphate (PNP) and inorganic phosphate. This Chlorobium phaeovibrioides (strain DSM 265 / 1930) (Prosthecochloris vibrioformis (strain DSM 265)) protein is Pyridoxine 5'-phosphate synthase.